A 264-amino-acid chain; its full sequence is Signal peptidase I (264 aa).

At 1 to 18 (MNRDNTKTNKTVKQEFAS) the chain is on the cytoplasmic side. Residues 19–39 (FTFVICIALVIRILIMEPFTV) traverse the membrane as a helical segment. Over 40–264 (PTGSMKATIL…IFKNLYNVDE (225 aa)) the chain is Periplasmic. Catalysis depends on residues serine 43 and lysine 106.

It belongs to the peptidase S26 family.

It localises to the cell inner membrane. It catalyses the reaction Cleavage of hydrophobic, N-terminal signal or leader sequences from secreted and periplasmic proteins.. Functionally, complements E.coli mutants temperature-sensitive for LepB function. The polypeptide is Signal peptidase I (lepB) (Rickettsia typhi (strain ATCC VR-144 / Wilmington)).